A 749-amino-acid chain; its full sequence is Formate acetyltransferase (749 aa).

Positions E3–K619 constitute a PFL domain. Catalysis depends on C413, which acts as the S-acetylcysteine intermediate. The Cysteine radical intermediate role is filled by C414. The 124-residue stretch at P626–M749 folds into the Glycine radical domain. Position 724 is a glycine radical (G724).

Belongs to the glycyl radical enzyme (GRE) family. PFL subfamily. In terms of assembly, homodimer.

The protein resides in the cytoplasm. The catalysed reaction is formate + acetyl-CoA = pyruvate + CoA. The protein operates within fermentation; pyruvate fermentation; formate from pyruvate: step 1/1. Catalyzes the conversion of pyruvate to formate and acetyl-CoA. The sequence is that of Formate acetyltransferase (pflB) from Staphylococcus aureus (strain USA300).